Consider the following 388-residue polypeptide: Succinate--CoA ligase [ADP-forming] subunit beta (388 aa).

Residues 9-244 (KQLFARYGLP…QSQEDPREAQ (236 aa)) form the ATP-grasp domain. ATP is bound by residues Lys-46, 53-55 (GRG), Glu-99, Thr-102, and Glu-107. Asn-199 and Asp-213 together coordinate Mg(2+). Residues Asn-264 and 321–323 (GIV) contribute to the substrate site.

It belongs to the succinate/malate CoA ligase beta subunit family. In terms of assembly, heterotetramer of two alpha and two beta subunits. It depends on Mg(2+) as a cofactor.

It carries out the reaction succinate + ATP + CoA = succinyl-CoA + ADP + phosphate. The enzyme catalyses GTP + succinate + CoA = succinyl-CoA + GDP + phosphate. It participates in carbohydrate metabolism; tricarboxylic acid cycle; succinate from succinyl-CoA (ligase route): step 1/1. Functionally, succinyl-CoA synthetase functions in the citric acid cycle (TCA), coupling the hydrolysis of succinyl-CoA to the synthesis of either ATP or GTP and thus represents the only step of substrate-level phosphorylation in the TCA. The beta subunit provides nucleotide specificity of the enzyme and binds the substrate succinate, while the binding sites for coenzyme A and phosphate are found in the alpha subunit. This chain is Succinate--CoA ligase [ADP-forming] subunit beta, found in Salmonella arizonae (strain ATCC BAA-731 / CDC346-86 / RSK2980).